Here is a 207-residue protein sequence, read N- to C-terminus: Small ribosomal subunit protein uS4c (207 aa).

The region spanning 92–155 is the S4 RNA-binding domain; it reads MRLDNILFRL…TYQSILSKRI (64 aa).

The protein belongs to the universal ribosomal protein uS4 family. Part of the 30S ribosomal subunit. Contacts protein S5. The interaction surface between S4 and S5 is involved in control of translational fidelity.

Its subcellular location is the plastid. It is found in the chloroplast. Its function is as follows. One of the primary rRNA binding proteins, it binds directly to 16S rRNA where it nucleates assembly of the body of the 30S subunit. In terms of biological role, with S5 and S12 plays an important role in translational accuracy. The protein is Small ribosomal subunit protein uS4c (rps4) of Equisetum scirpoides (Dwarf-scouring rush).